Reading from the N-terminus, the 845-residue chain is Tyrosine-protein phosphatase corkscrew (845 aa).

2 SH2 domains span residues 6–101 (WFHP…KQPL) and 111–205 (WFHG…RQPF). Positions 227 to 645 (FWEEFESLQQ…KFVYYAVQHY (419 aa)) constitute a Tyrosine-protein phosphatase domain. Residues 289-444 (IRLPTDGDLY…REREREMFKT (156 aa)) are PTPase insert (Cys/Ser-rich). The segment at 362-402 (SKHKRSESSASSSPSSGSGSGPGSSGTSGVSSVNGPGTPTN) is disordered. Low complexity-rich tracts occupy residues 369–378 (SSASSSPSSG) and 388–400 (TSGVSSVNGPGTP). Serine 419 is modified (phosphoserine). Substrate-binding positions include aspartate 545, 583–589 (CSAGIGR), and glutamine 630. Cysteine 583 functions as the Phosphocysteine intermediate in the catalytic mechanism. A disordered region spans residues 793 to 824 (DSLKQQQQREEQAPAGAGKMQQPAPPLRPRPG).

The protein belongs to the protein-tyrosine phosphatase family. Non-receptor class subfamily. Interacts with drpr isoform A. As to expression, expressed uniformly throughout all tissues during embryogenesis.

The protein resides in the cytoplasm. It catalyses the reaction O-phospho-L-tyrosyl-[protein] + H2O = L-tyrosyl-[protein] + phosphate. Functionally, required in all receptor tyrosine kinase signaling pathways. Functions downstream of the receptor tyrosine kinase torso, acting in concert with D-Raf via tailless. Also functions downstream of Egfr (epidermal growth factor receptor) and btl (fibroblast growth factor receptor). The SH2 domain suggests that csw effects its role by mediating heteromeric protein interactions. Maternally required for normal determination of cell fates at the termini of the embryo. Required for cell fate specification of the ventral ectoderm, in the developing embryonic CNS and for embryonic tracheal cell migration. Functions during imaginal development for proper formation of adult structures such as eyes, aristae, L5 wing vein and the tarsal claw. Dephosphorylates drpr isoform A which is required for the inhibition by drpr isoform A of glial cell engulfment of axonal debris produced following axonal injury. The polypeptide is Tyrosine-protein phosphatase corkscrew (csw) (Drosophila melanogaster (Fruit fly)).